The following is a 113-amino-acid chain: Large ribosomal subunit protein bL19 (113 aa).

This sequence belongs to the bacterial ribosomal protein bL19 family.

Its function is as follows. This protein is located at the 30S-50S ribosomal subunit interface and may play a role in the structure and function of the aminoacyl-tRNA binding site. The sequence is that of Large ribosomal subunit protein bL19 from Nocardia farcinica (strain IFM 10152).